The following is a 327-amino-acid chain: GTP 3',8-cyclase (327 aa).

The Radical SAM core domain maps to 4–226 (AFARDIHYLR…LRLGDHPGIR (223 aa)). Arg-13 is a binding site for GTP. [4Fe-4S] cluster-binding residues include Cys-20 and Cys-24. Tyr-26 lines the S-adenosyl-L-methionine pocket. Cys-27 is a binding site for [4Fe-4S] cluster. Arg-63 serves as a coordination point for GTP. Gly-67 provides a ligand contact to S-adenosyl-L-methionine. Thr-94 is a binding site for GTP. Ser-118 lines the S-adenosyl-L-methionine pocket. Residue Lys-155 coordinates GTP. Met-189 contacts S-adenosyl-L-methionine. Positions 254 and 257 each coordinate [4Fe-4S] cluster. 259-261 (RLR) provides a ligand contact to GTP. Cys-271 lines the [4Fe-4S] cluster pocket.

This sequence belongs to the radical SAM superfamily. MoaA family. In terms of assembly, monomer and homodimer. [4Fe-4S] cluster is required as a cofactor.

It catalyses the reaction GTP + AH2 + S-adenosyl-L-methionine = (8S)-3',8-cyclo-7,8-dihydroguanosine 5'-triphosphate + 5'-deoxyadenosine + L-methionine + A + H(+). The protein operates within cofactor biosynthesis; molybdopterin biosynthesis. In terms of biological role, catalyzes the cyclization of GTP to (8S)-3',8-cyclo-7,8-dihydroguanosine 5'-triphosphate. This chain is GTP 3',8-cyclase, found in Heliobacterium modesticaldum (strain ATCC 51547 / Ice1).